We begin with the raw amino-acid sequence, 142 residues long: Large ribosomal subunit protein uL11 (142 aa).

This sequence belongs to the universal ribosomal protein uL11 family. Part of the ribosomal stalk of the 50S ribosomal subunit. Interacts with L10 and the large rRNA to form the base of the stalk. L10 forms an elongated spine to which L12 dimers bind in a sequential fashion forming a multimeric L10(L12)X complex. One or more lysine residues are methylated.

In terms of biological role, forms part of the ribosomal stalk which helps the ribosome interact with GTP-bound translation factors. The protein is Large ribosomal subunit protein uL11 of Xylella fastidiosa (strain Temecula1 / ATCC 700964).